Consider the following 168-residue polypeptide: MRVAVTGTPGTGKTTATEAVETALDVIHLNERIREEGLDAGRDEERDSLVADLDAVEAALAGEDDALIESHLAHHVDADRVVVLRCRPDILQERLVDRGEPAAKAAENAEAEALDVVLSEAVAEHGRESVYEIDTTEASPSAVAEAIEAVIDGERAPAVGTVDFTEHL.

ATP contacts are provided by glycine 10, glycine 12, lysine 13, threonine 14, and threonine 15. The tract at residues 28-51 (HLNERIREEGLDAGRDEERDSLVA) is NMP. The segment at 97-107 (DRGEPAAKAAE) is LID. Position 98 (arginine 98) interacts with ATP.

The protein belongs to the adenylate kinase family. AK6 subfamily. Interacts with uS11. Not a structural component of 40S pre-ribosomes, but transiently interacts with them by binding to uS11.

It carries out the reaction AMP + ATP = 2 ADP. The enzyme catalyses ATP + H2O = ADP + phosphate + H(+). In terms of biological role, broad-specificity nucleoside monophosphate (NMP) kinase that catalyzes the reversible transfer of the terminal phosphate group between nucleoside triphosphates and monophosphates. Also has ATPase activity. Involved in the late maturation steps of the 30S ribosomal particles, specifically 16S rRNA maturation. While NMP activity is not required for ribosome maturation, ATPase activity is. Associates transiently with small ribosomal subunit protein uS11. ATP hydrolysis breaks the interaction with uS11. May temporarily remove uS11 from the ribosome to enable a conformational change of the ribosomal RNA that is needed for the final maturation step of the small ribosomal subunit. The sequence is that of Putative adenylate kinase from Natronomonas pharaonis (strain ATCC 35678 / DSM 2160 / CIP 103997 / JCM 8858 / NBRC 14720 / NCIMB 2260 / Gabara) (Halobacterium pharaonis).